The primary structure comprises 573 residues: E3 ubiquitin-protein ligase TRIM23 (573 aa).

The segment at 31-76 adopts an RING-type; degenerate zinc-finger fold; the sequence is CGVCEDVFSLQGDKVPRLLLCGHTVCHDCLTRLPLHGRAIRCPFDR. The segment at 122–168 adopts a B box-type; degenerate zinc-finger fold; the sequence is ESIIRCDEDEAHVASVYCTVCATHLCSECSQVTHSTKTLAKHRRVPL. Residues 351 to 378 are a coiled coil; that stretch reads RVVLAKQEITRLLETLQKQQQQFTEVAD. Positions 390–573 are ARF-like; sequence FTKDNRVYHG…LVAAGVLDVA (184 aa). Residues 411 to 418, 454 to 458, and 513 to 516 each bind GTP; these read LDGAGKTT, VGGKH, and KQDV.

The protein in the C-terminal section; belongs to the small GTPase superfamily. Arf family. As to quaternary structure, homodimer. Interacts with PSCD1. Interacts with UBE2D2. Interacts with TBK1 (via N-terminal kinase domain) and p62/SQSTM1.

It is found in the cytoplasm. Its subcellular location is the endomembrane system. It localises to the golgi apparatus membrane. The protein resides in the lysosome membrane. The enzyme catalyses S-ubiquitinyl-[E2 ubiquitin-conjugating enzyme]-L-cysteine + [acceptor protein]-L-lysine = [E2 ubiquitin-conjugating enzyme]-L-cysteine + N(6)-ubiquitinyl-[acceptor protein]-L-lysine.. The protein operates within protein modification; protein ubiquitination. Its function is as follows. Acts as an E3 ubiquitin-protein ligase. Plays an essential role in autophagy activation during viral infection. Mechanistically, activates TANK-binding kinase 1/TBK1 by facilitating its dimerization and ability to phosphorylate the selective autophagy receptor SQSTM1. In order to achieve this function, TRIM23 mediates 'Lys-27'-linked auto-ubiquitination of its ADP-ribosylation factor (ARF) domain to induce its GTPase activity and its recruitment to autophagosomes. In Rattus norvegicus (Rat), this protein is E3 ubiquitin-protein ligase TRIM23 (Trim23).